A 505-amino-acid chain; its full sequence is Probable cytosol aminopeptidase (505 aa).

Positions 269 and 274 each coordinate Mn(2+). The active site involves lysine 281. Mn(2+)-binding residues include aspartate 292, aspartate 351, and glutamate 353. Arginine 355 is a catalytic residue.

This sequence belongs to the peptidase M17 family. It depends on Mn(2+) as a cofactor.

It localises to the cytoplasm. It carries out the reaction Release of an N-terminal amino acid, Xaa-|-Yaa-, in which Xaa is preferably Leu, but may be other amino acids including Pro although not Arg or Lys, and Yaa may be Pro. Amino acid amides and methyl esters are also readily hydrolyzed, but rates on arylamides are exceedingly low.. The catalysed reaction is Release of an N-terminal amino acid, preferentially leucine, but not glutamic or aspartic acids.. Functionally, presumably involved in the processing and regular turnover of intracellular proteins. Catalyzes the removal of unsubstituted N-terminal amino acids from various peptides. The polypeptide is Probable cytosol aminopeptidase (Rhodococcus jostii (strain RHA1)).